The primary structure comprises 480 residues: UDP-N-acetylmuramoyl-L-alanyl-D-glutamate--2,6-diaminopimelate ligase (480 aa).

UDP-N-acetyl-alpha-D-muramoyl-L-alanyl-D-glutamate is bound at residue Ser-21. Position 98-104 (98-104 (GTNGKSS)) interacts with ATP. Residues 144–145 (TT), Ser-171, Gln-177, and Arg-179 each bind UDP-N-acetyl-alpha-D-muramoyl-L-alanyl-D-glutamate. The residue at position 211 (Lys-211) is an N6-carboxylysine. Meso-2,6-diaminopimelate is bound by residues Arg-372, 396 to 399 (DNPR), Gly-446, and Glu-450. The Meso-diaminopimelate recognition motif signature appears at 396-399 (DNPR).

It belongs to the MurCDEF family. MurE subfamily. Mg(2+) is required as a cofactor. Carboxylation is probably crucial for Mg(2+) binding and, consequently, for the gamma-phosphate positioning of ATP.

The protein resides in the cytoplasm. It catalyses the reaction UDP-N-acetyl-alpha-D-muramoyl-L-alanyl-D-glutamate + meso-2,6-diaminopimelate + ATP = UDP-N-acetyl-alpha-D-muramoyl-L-alanyl-gamma-D-glutamyl-meso-2,6-diaminopimelate + ADP + phosphate + H(+). Its pathway is cell wall biogenesis; peptidoglycan biosynthesis. Functionally, catalyzes the addition of meso-diaminopimelic acid to the nucleotide precursor UDP-N-acetylmuramoyl-L-alanyl-D-glutamate (UMAG) in the biosynthesis of bacterial cell-wall peptidoglycan. The polypeptide is UDP-N-acetylmuramoyl-L-alanyl-D-glutamate--2,6-diaminopimelate ligase (Rickettsia prowazekii (strain Madrid E)).